Here is a 487-residue protein sequence, read N- to C-terminus: Protein nucleotidyltransferase YdiU (487 aa).

Gly90, Gly92, Arg93, Lys113, Asp125, Gly126, Arg176, and Arg183 together coordinate ATP. Residue Asp252 is the Proton acceptor of the active site. Asn253 and Asp262 together coordinate Mg(2+). ATP is bound at residue Asp262.

Belongs to the SELO family. Requires Mg(2+) as cofactor. The cofactor is Mn(2+).

It catalyses the reaction L-seryl-[protein] + ATP = 3-O-(5'-adenylyl)-L-seryl-[protein] + diphosphate. It carries out the reaction L-threonyl-[protein] + ATP = 3-O-(5'-adenylyl)-L-threonyl-[protein] + diphosphate. The catalysed reaction is L-tyrosyl-[protein] + ATP = O-(5'-adenylyl)-L-tyrosyl-[protein] + diphosphate. The enzyme catalyses L-histidyl-[protein] + UTP = N(tele)-(5'-uridylyl)-L-histidyl-[protein] + diphosphate. It catalyses the reaction L-seryl-[protein] + UTP = O-(5'-uridylyl)-L-seryl-[protein] + diphosphate. It carries out the reaction L-tyrosyl-[protein] + UTP = O-(5'-uridylyl)-L-tyrosyl-[protein] + diphosphate. Its function is as follows. Nucleotidyltransferase involved in the post-translational modification of proteins. It can catalyze the addition of adenosine monophosphate (AMP) or uridine monophosphate (UMP) to a protein, resulting in modifications known as AMPylation and UMPylation. The sequence is that of Protein nucleotidyltransferase YdiU from Pseudomonas syringae pv. tomato (strain ATCC BAA-871 / DC3000).